Consider the following 198-residue polypeptide: Recombination protein RecR (198 aa).

A C4-type zinc finger spans residues 57–72 (CSVCGNLTDEDPCSIC). Residues 80 to 175 (SMILVVEDSK…KVTRLARGLA (96 aa)) form the Toprim domain.

This sequence belongs to the RecR family.

May play a role in DNA repair. It seems to be involved in an RecBC-independent recombinational process of DNA repair. It may act with RecF and RecO. The protein is Recombination protein RecR of Streptococcus uberis (strain ATCC BAA-854 / 0140J).